Here is a 349-residue protein sequence, read N- to C-terminus: Probable dual-specificity RNA methyltransferase RlmN (349 aa).

The active-site Proton acceptor is Glu-93. Positions 99–329 constitute a Radical SAM core domain; that stretch reads YKHGNTICVS…TTIRREMGSD (231 aa). Residues Cys-106 and Cys-334 are joined by a disulfide bond. The [4Fe-4S] cluster site is built by Cys-113, Cys-117, and Cys-120. S-adenosyl-L-methionine is bound by residues 160 to 161, Ser-192, 215 to 217, and Asn-291; these read GE and SLH. The active-site S-methylcysteine intermediate is Cys-334.

The protein belongs to the radical SAM superfamily. RlmN family. The cofactor is [4Fe-4S] cluster.

It is found in the cytoplasm. It carries out the reaction adenosine(2503) in 23S rRNA + 2 reduced [2Fe-2S]-[ferredoxin] + 2 S-adenosyl-L-methionine = 2-methyladenosine(2503) in 23S rRNA + 5'-deoxyadenosine + L-methionine + 2 oxidized [2Fe-2S]-[ferredoxin] + S-adenosyl-L-homocysteine. The catalysed reaction is adenosine(37) in tRNA + 2 reduced [2Fe-2S]-[ferredoxin] + 2 S-adenosyl-L-methionine = 2-methyladenosine(37) in tRNA + 5'-deoxyadenosine + L-methionine + 2 oxidized [2Fe-2S]-[ferredoxin] + S-adenosyl-L-homocysteine. Specifically methylates position 2 of adenine 2503 in 23S rRNA and position 2 of adenine 37 in tRNAs. The sequence is that of Probable dual-specificity RNA methyltransferase RlmN from Clostridium tetani (strain Massachusetts / E88).